The sequence spans 610 residues: POU domain, class 6, transcription factor 1 (610 aa).

The tract at residues 55 to 87 is disordered; sequence SSAGAAESGGDEEGSGQSLEATEEAQLDGPVTT. In terms of domain architecture, POU-specific spans 448 to 522; it reads EEAINLEEIR…VLERWLAEAE (75 aa). Positions 543–602 form a DNA-binding region, homeobox; the sequence is KRKRRTSFTPQAIEVLNTYFEKNSLPTGQEITEIAKELNYDREVVRVWFCNRRQTLKNTS.

The protein belongs to the POU transcription factor family. Class-6 subfamily. In terms of tissue distribution, ubiquitously expressed during embryogenesis.

The protein resides in the nucleus. Transcription factor that binds with high affinity to the motif 5'-TAATGARAT-3'. The polypeptide is POU domain, class 6, transcription factor 1 (pou6f1) (Danio rerio (Zebrafish)).